A 493-amino-acid chain; its full sequence is Cardiolipin synthase 1 (493 aa).

The next 2 helical transmembrane spans lie at 13-33 (FTII…IIIF) and 45-65 (WAWL…YLFF). PLD phosphodiesterase domains are found at residues 228 to 255 (MNNR…GDEY) and 406 to 433 (ENGF…DFRS). Active-site residues include His-233, Lys-235, Asp-240, His-411, Lys-413, and Asp-418.

It belongs to the phospholipase D family. Cardiolipin synthase subfamily.

The protein resides in the cell membrane. The catalysed reaction is 2 a 1,2-diacyl-sn-glycero-3-phospho-(1'-sn-glycerol) = a cardiolipin + glycerol. Its function is as follows. Catalyzes the reversible phosphatidyl group transfer from one phosphatidylglycerol molecule to another to form cardiolipin (CL) (diphosphatidylglycerol) and glycerol. The chain is Cardiolipin synthase 1 (cls1) from Staphylococcus aureus (strain COL).